We begin with the raw amino-acid sequence, 146 residues long: Hemoglobin subunit beta (146 aa).

The Globin domain occupies 2–146 (HWTETERATI…VVAALSREYH (145 aa)). Heme b contacts are provided by histidine 63 and histidine 92.

This sequence belongs to the globin family. Heterotetramer of two alpha chains and two beta chains (an easy dimerization is also reported). As to expression, red blood cells.

Involved in oxygen transport from the lung to the various peripheral tissues. This chain is Hemoglobin subunit beta (HBB), found in Latimeria chalumnae (Coelacanth).